Consider the following 362-residue polypeptide: Heat-inducible transcription repressor HrcA (362 aa).

This sequence belongs to the HrcA family.

In terms of biological role, negative regulator of class I heat shock genes (grpE-dnaK-dnaJ and groELS operons). Prevents heat-shock induction of these operons. The sequence is that of Heat-inducible transcription repressor HrcA from Nitrobacter winogradskyi (strain ATCC 25391 / DSM 10237 / CIP 104748 / NCIMB 11846 / Nb-255).